The following is a 376-amino-acid chain: Thymidine kinase (376 aa).

The tract at residues 1–47 (MASHAGQQHAPAFGQAARASGPTDGRAASRPSHRQGASEARGDPELP) is disordered. An ATP-binding site is contributed by 56 to 63 (GPHGVGKT). The active-site Proton acceptor is glutamate 84. Tyrosine 102 and glutamine 126 together coordinate substrate. Residue arginine 217 coordinates ATP. Arginine 223 provides a ligand contact to substrate.

Belongs to the herpesviridae thymidine kinase family. Homodimer.

It catalyses the reaction thymidine + ATP = dTMP + ADP + H(+). Functionally, catalyzes the transfer of the gamma-phospho group of ATP to thymidine to generate dTMP in the salvage pathway of pyrimidine synthesis. The dTMP serves as a substrate for DNA polymerase during viral DNA replication. Allows the virus to be reactivated and to grow in non-proliferative cells lacking a high concentration of phosphorylated nucleic acid precursors. The chain is Thymidine kinase from Human herpesvirus 2 (strain 333) (HHV-2).